The primary structure comprises 474 residues: 3-isopropylmalate dehydratase large subunit (474 aa).

Positions 350, 411, and 414 each coordinate [4Fe-4S] cluster.

Belongs to the aconitase/IPM isomerase family. LeuC type 1 subfamily. As to quaternary structure, heterodimer of LeuC and LeuD. It depends on [4Fe-4S] cluster as a cofactor.

It carries out the reaction (2R,3S)-3-isopropylmalate = (2S)-2-isopropylmalate. It functions in the pathway amino-acid biosynthesis; L-leucine biosynthesis; L-leucine from 3-methyl-2-oxobutanoate: step 2/4. Catalyzes the isomerization between 2-isopropylmalate and 3-isopropylmalate, via the formation of 2-isopropylmaleate. The sequence is that of 3-isopropylmalate dehydratase large subunit from Hydrogenovibrio crunogenus (strain DSM 25203 / XCL-2) (Thiomicrospira crunogena).